We begin with the raw amino-acid sequence, 270 residues long: MLELKPPLVLLSGPAGFGEYLKLMDHRYVGGVLLKTVTLHPKEGNPTPRMADSDFYVINRIGLENPGIHAFVENIPELPVPMIASLGGDSFEEYLEVARVFKKVADRFYAVEFNFSCPNVKEGGLSIVKNAEEWKKLLNTLRKELPDSFLIAKVGVEGIFVEDAAEFVMKTGWDGITLVNTVRGLHFEKDTMILGGLSGPVLKPIALRAVYEVKKRFPELFVIASGGVYSVKDAEEFLKVGADVIGVGSALFKDPGVVEEIGKYLLEVKR.

FMN-binding positions include S12 and 35-36; that span reads KT. Substrate is bound by residues K35, 59–63, and N114; that span reads NRIGL. N114 provides a ligand contact to FMN. C117 functions as the Nucleophile in the catalytic mechanism. FMN is bound by residues K153 and V179. 180-181 serves as a coordination point for substrate; that stretch reads NT. FMN-binding positions include G199, 226 to 227, and 248 to 249; these read GG and GS.

This sequence belongs to the dihydroorotate dehydrogenase family. Type 1 subfamily. Heterotetramer of 2 PyrK and 2 PyrD type B subunits. FMN serves as cofactor.

Its subcellular location is the cytoplasm. It carries out the reaction (S)-dihydroorotate + NAD(+) = orotate + NADH + H(+). It participates in pyrimidine metabolism; UMP biosynthesis via de novo pathway; orotate from (S)-dihydroorotate (NAD(+) route): step 1/1. In terms of biological role, catalyzes the conversion of dihydroorotate to orotate with NAD(+) as electron acceptor. The chain is Dihydroorotate dehydrogenase B (NAD(+)), catalytic subunit (pyrD) from Thermotoga maritima (strain ATCC 43589 / DSM 3109 / JCM 10099 / NBRC 100826 / MSB8).